The chain runs to 93 residues: Cell division protein FtsB (93 aa).

The Cytoplasmic segment spans residues 1–3; sequence MRL. The chain crosses the membrane as a helical span at residues 4-21; the sequence is FILVLTLLFGWLQYTLWF. Residues 22-93 are Periplasmic-facing; it reads GKNGVSDYYT…FYRIVGEENQ (72 aa). Positions 42 to 75 form a coiled coil; sequence VNTKLQARNSEMYAEIDDLKQGLDAIEERARHEL.

This sequence belongs to the FtsB family. As to quaternary structure, part of a complex composed of FtsB, FtsL and FtsQ.

It is found in the cell inner membrane. Functionally, essential cell division protein. May link together the upstream cell division proteins, which are predominantly cytoplasmic, with the downstream cell division proteins, which are predominantly periplasmic. The polypeptide is Cell division protein FtsB (Vibrio vulnificus (strain YJ016)).